Reading from the N-terminus, the 370-residue chain is MPHQQILMLFGLLPVATNISTWWNFGSMLLACLTLQLLTGFFLAVHYTANINLAFSSIIHITRDVPYGWMMQNLHAIGASMFFICIYIHIARGLYYGSYLNKETWLSGTTLLIMLMATAFFGYVLPWGQMSFWAATVITNLLTAIPYLGSTMTTWLWGGFAINDPTLTRFFALHFILPFGIISLSSLHILLLHEEGSSNPLGTNSDIDKIPFHPYQTYKDMLMLTIMTIMLLTIVSFFPDIFNDPDNFSKANPLVTPQHIKPEWYFLFAYGILRSIPNKLGGALALTMSIMILLTMPFTHTSKLRSMMFRPLMQLTFWTFTATFLVISWTATKPVEPPFTTISQVAALMYFLFFISNPIMGWLENKIMKL.

The next 4 helical transmembrane spans lie at 25–45 (FGSM…FLAV), 69–90 (WMMQ…YIHI), 105–125 (WLSG…GYVL), and 170–190 (FFAL…LHIL). Residues histidine 75 and histidine 89 each contribute to the heme b site. Positions 174 and 188 each coordinate heme b. Histidine 193 provides a ligand contact to a ubiquinone. The next 4 helical transmembrane spans lie at 218–238 (YKDM…VSFF), 280–300 (LGGA…PFTH), 312–332 (LMQL…WTAT), and 339–358 (FTTI…ISNP).

Belongs to the cytochrome b family. As to quaternary structure, the cytochrome bc1 complex contains 3 respiratory subunits (MT-CYB, CYC1 and UQCRFS1), 2 core proteins (UQCRC1 and UQCRC2) and probably 6 low-molecular weight proteins. Requires heme b as cofactor.

It is found in the mitochondrion inner membrane. Its function is as follows. Component of the ubiquinol-cytochrome c reductase complex (complex III or cytochrome b-c1 complex) that is part of the mitochondrial respiratory chain. The b-c1 complex mediates electron transfer from ubiquinol to cytochrome c. Contributes to the generation of a proton gradient across the mitochondrial membrane that is then used for ATP synthesis. The sequence is that of Cytochrome b (MT-CYB) from Chilabothrus striatus (Haitian boa constrictor).